A 208-amino-acid polypeptide reads, in one-letter code: Small ribosomal subunit protein uS4B (208 aa).

The region spanning 95-160 (KRLDNVVFRL…NQVYMAAKQA (66 aa)) is the S4 RNA-binding domain.

It belongs to the universal ribosomal protein uS4 family. Part of the 30S ribosomal subunit. Contacts protein S5. The interaction surface between S4 and S5 is involved in control of translational fidelity.

Its function is as follows. One of the primary rRNA binding proteins, it binds directly to 16S rRNA where it nucleates assembly of the body of the 30S subunit. In terms of biological role, with S5 and S12 plays an important role in translational accuracy. The protein is Small ribosomal subunit protein uS4B of Bdellovibrio bacteriovorus (strain ATCC 15356 / DSM 50701 / NCIMB 9529 / HD100).